Here is a 1342-residue protein sequence, read N- to C-terminus: DNA-directed RNA polymerase subunit beta (1342 aa).

It belongs to the RNA polymerase beta chain family. In terms of assembly, the RNAP catalytic core consists of 2 alpha, 1 beta, 1 beta' and 1 omega subunit. When a sigma factor is associated with the core the holoenzyme is formed, which can initiate transcription.

The enzyme catalyses RNA(n) + a ribonucleoside 5'-triphosphate = RNA(n+1) + diphosphate. Functionally, DNA-dependent RNA polymerase catalyzes the transcription of DNA into RNA using the four ribonucleoside triphosphates as substrates. This Yersinia pseudotuberculosis serotype O:1b (strain IP 31758) protein is DNA-directed RNA polymerase subunit beta.